A 374-amino-acid chain; its full sequence is Chaperone protein DnaJ (374 aa).

Positions 4-68 constitute a J domain; sequence DYYDILGVSR…QMRGRYDQFG (65 aa). The CR-type zinc finger occupies 133–215; the sequence is GGEQQIRISH…CGGRGQNQVS (83 aa). Cys-146, Cys-149, Cys-163, Cys-166, Cys-189, Cys-192, Cys-203, and Cys-206 together coordinate Zn(2+). 4 CXXCXGXG motif repeats span residues 146–153, 163–170, 189–196, and 203–210; these read CKTCEGTG, CSTCQGSG, CPTCNGQG, and CDSCGGRG.

Belongs to the DnaJ family. As to quaternary structure, homodimer. Zn(2+) serves as cofactor.

Its subcellular location is the cytoplasm. Functionally, participates actively in the response to hyperosmotic and heat shock by preventing the aggregation of stress-denatured proteins and by disaggregating proteins, also in an autonomous, DnaK-independent fashion. Unfolded proteins bind initially to DnaJ; upon interaction with the DnaJ-bound protein, DnaK hydrolyzes its bound ATP, resulting in the formation of a stable complex. GrpE releases ADP from DnaK; ATP binding to DnaK triggers the release of the substrate protein, thus completing the reaction cycle. Several rounds of ATP-dependent interactions between DnaJ, DnaK and GrpE are required for fully efficient folding. Also involved, together with DnaK and GrpE, in the DNA replication of plasmids through activation of initiation proteins. The chain is Chaperone protein DnaJ from Acaryochloris marina (strain MBIC 11017).